Here is a 177-residue protein sequence, read N- to C-terminus: Protein-export protein SecB (177 aa).

The protein belongs to the SecB family. In terms of assembly, homotetramer, a dimer of dimers. One homotetramer interacts with 1 SecA dimer.

Its subcellular location is the cytoplasm. Its function is as follows. One of the proteins required for the normal export of preproteins out of the cell cytoplasm. It is a molecular chaperone that binds to a subset of precursor proteins, maintaining them in a translocation-competent state. It also specifically binds to its receptor SecA. In Ehrlichia canis (strain Jake), this protein is Protein-export protein SecB.